A 410-amino-acid polypeptide reads, in one-letter code: Zinc finger TRAF-type-containing protein 1 (410 aa).

The segment covering 1–13 (MSGAEEAGGGGPA) has biased composition (gly residues). Positions 1–22 (MSGAEEAGGGGPAAGPAGSVPA) are disordered. The segment at 117–162 (CTVCLDLPKASVYQCTNGHLMCAGCFIHLLADARLKEEQATCPNCR) adopts an RING-type; degenerate zinc-finger fold. Residues 158 to 231 (CPNCRCEISK…PWHGPFHELT (74 aa)) form a TRAF-type zinc finger.

Belongs to the ZFTRAF1 family. As to quaternary structure, interacts with LGALS3.

It is found in the cytoplasm. The protein localises to the perinuclear region. The protein is Zinc finger TRAF-type-containing protein 1 of Bos taurus (Bovine).